The following is a 732-amino-acid chain: MHKIPCFVLIYEQFDIIKKCLTFLTKYAHRLHIVIIENYSVNTNQQIKPYVMDLLEKGIICKYYLFEENIANNAVHIVLEEAIAKYLDPTVFPYVFVTDGDLTIEDTNWIDEHVNIMDKHKNVFICGCSLDNSNLPTKTMPNAVHWIKPGIDQGDYIKGITGTTFTLHRTNELIEAIKFFNSKGWRYLDSNLHKFCFDAKRMIWARTKKAKCYHLTWDLYLDLTHPYTIMKLKNVNTMWKRSQSSKFQLYENSSDLRLDIYQELNDTKETIIVRKLKVISSGFDLGLDQSGIEYNGIFYPASRGFTVYTITDETVSVSNFDTHINSCTVNLARHIRESYRSGCHYIISVVHDDGFKKLSKNQLKEVGGLLSLDKIFYLYIRFSYYFVYDNIHKSLIDEDVSKVSFLSKEFSDLKFSKLISNNQITPSSTISNSNSQDLNIPDSTIIPLLSNNNGPITKQYHIVCLKWMLMFYREYIESFGSLLNIDYILLDNFNNYNYINSPEHVYIFCQLTDDSLLTKPFQKMILNTEQLTIAKYMDRTRKYINHGIQIIDYSIENIKLCNNPSTIYLPYQYSDSEIQILKKLYDSTPKKYDLVFCGSISQRRRYILDSLKSHGVSILELVTGHWGHPRDVEMASCKMLINIHYAHDYNIYESMRCDRWAFATMPVVSEDSIHYGLLDVKKHGLITFCEYDQLILKTLEALKNFKKTNENIINTVKKEREHQLIKVFTELK.

Belongs to the mimivirus L137 family.

This is an uncharacterized protein from Acanthamoeba polyphaga mimivirus (APMV).